The following is a 343-amino-acid chain: Methionine import ATP-binding protein MetN (343 aa).

Residues 2 to 241 (IKLFHINKIF…PKTPIAQAFI (240 aa)) enclose the ABC transporter domain. 38–45 (GSSGAGKS) lines the ATP pocket.

The protein belongs to the ABC transporter superfamily. Methionine importer (TC 3.A.1.24) family. In terms of assembly, the complex is composed of two ATP-binding proteins (MetN), two transmembrane proteins (MetI) and a solute-binding protein (MetQ).

The protein resides in the cell inner membrane. It carries out the reaction L-methionine(out) + ATP + H2O = L-methionine(in) + ADP + phosphate + H(+). The catalysed reaction is D-methionine(out) + ATP + H2O = D-methionine(in) + ADP + phosphate + H(+). Its function is as follows. Part of the ABC transporter complex MetNIQ involved in methionine import. Responsible for energy coupling to the transport system. The sequence is that of Methionine import ATP-binding protein MetN from Photorhabdus laumondii subsp. laumondii (strain DSM 15139 / CIP 105565 / TT01) (Photorhabdus luminescens subsp. laumondii).